The primary structure comprises 396 residues: Elongation factor Tu 2 (396 aa).

In terms of domain architecture, tr-type G spans 10 to 206; it reads KPHVNVGTIG…ALDSYIPLPE (197 aa). The interval 19–26 is G1; the sequence is GHVDHGKT. A GTP-binding site is contributed by 19-26; sequence GHVDHGKT. Residue Thr26 coordinates Mg(2+). Residues 60–64 form a G2 region; the sequence is GITIN. The tract at residues 81-84 is G3; it reads DCPG. Residues 81–85 and 136–139 each bind GTP; these read DCPGH and NKCD. Residues 136-139 form a G4 region; it reads NKCD. Positions 174–176 are G5; that stretch reads SAK.

Belongs to the TRAFAC class translation factor GTPase superfamily. Classic translation factor GTPase family. EF-Tu/EF-1A subfamily. In terms of assembly, monomer.

Its subcellular location is the cytoplasm. The enzyme catalyses GTP + H2O = GDP + phosphate + H(+). Functionally, GTP hydrolase that promotes the GTP-dependent binding of aminoacyl-tRNA to the A-site of ribosomes during protein biosynthesis. The sequence is that of Elongation factor Tu 2 from Albidiferax ferrireducens (strain ATCC BAA-621 / DSM 15236 / T118) (Rhodoferax ferrireducens).